The sequence spans 291 residues: Acetylglutamate kinase (291 aa).

Residues 61–62 (GG), Arg-83, and Asn-187 contribute to the substrate site.

Belongs to the acetylglutamate kinase family. ArgB subfamily.

Its subcellular location is the cytoplasm. The enzyme catalyses N-acetyl-L-glutamate + ATP = N-acetyl-L-glutamyl 5-phosphate + ADP. It functions in the pathway amino-acid biosynthesis; L-arginine biosynthesis; N(2)-acetyl-L-ornithine from L-glutamate: step 2/4. Functionally, catalyzes the ATP-dependent phosphorylation of N-acetyl-L-glutamate. The sequence is that of Acetylglutamate kinase from Methanoregula boonei (strain DSM 21154 / JCM 14090 / 6A8).